Consider the following 175-residue polypeptide: Peptide deformylase (175 aa).

Fe cation contacts are provided by C94 and H136. E137 is an active-site residue. Residue H140 coordinates Fe cation.

The protein belongs to the polypeptide deformylase family. Fe(2+) serves as cofactor.

The enzyme catalyses N-terminal N-formyl-L-methionyl-[peptide] + H2O = N-terminal L-methionyl-[peptide] + formate. Removes the formyl group from the N-terminal Met of newly synthesized proteins. Requires at least a dipeptide for an efficient rate of reaction. N-terminal L-methionine is a prerequisite for activity but the enzyme has broad specificity at other positions. The sequence is that of Peptide deformylase from Brucella suis biovar 1 (strain 1330).